A 191-amino-acid polypeptide reads, in one-letter code: Elongation factor P (191 aa).

The protein belongs to the elongation factor P family.

The protein resides in the cytoplasm. The protein operates within protein biosynthesis; polypeptide chain elongation. In terms of biological role, involved in peptide bond synthesis. Stimulates efficient translation and peptide-bond synthesis on native or reconstituted 70S ribosomes in vitro. Probably functions indirectly by altering the affinity of the ribosome for aminoacyl-tRNA, thus increasing their reactivity as acceptors for peptidyl transferase. The polypeptide is Elongation factor P (Bartonella tribocorum (strain CIP 105476 / IBS 506)).